A 216-amino-acid polypeptide reads, in one-letter code: Uracil phosphoribosyltransferase (216 aa).

5-phospho-alpha-D-ribose 1-diphosphate contacts are provided by residues R85, R110, and 135 to 143; that span reads DPMVATGYS. Residues I200 and 205–207 contribute to the uracil site; that span reads GDA. D206 is a binding site for 5-phospho-alpha-D-ribose 1-diphosphate.

It belongs to the UPRTase family. The cofactor is Mg(2+).

The enzyme catalyses UMP + diphosphate = 5-phospho-alpha-D-ribose 1-diphosphate + uracil. It participates in pyrimidine metabolism; UMP biosynthesis via salvage pathway; UMP from uracil: step 1/1. With respect to regulation, allosterically activated by GTP. In terms of biological role, catalyzes the conversion of uracil and 5-phospho-alpha-D-ribose 1-diphosphate (PRPP) to UMP and diphosphate. This chain is Uracil phosphoribosyltransferase, found in Burkholderia ambifaria (strain ATCC BAA-244 / DSM 16087 / CCUG 44356 / LMG 19182 / AMMD) (Burkholderia cepacia (strain AMMD)).